The sequence spans 59 residues: Large ribosomal subunit protein uL30 (59 aa).

It belongs to the universal ribosomal protein uL30 family. Part of the 50S ribosomal subunit.

The chain is Large ribosomal subunit protein uL30 from Psychrobacter arcticus (strain DSM 17307 / VKM B-2377 / 273-4).